Consider the following 418-residue polypeptide: E3 ubiquitin-protein ligase makorin-2 (418 aa).

C3H1-type zinc fingers lie at residues 2 to 29 (NTKH…HDLA) and 31 to 58 (SKPS…HVKP). A disordered region spans residues 76–100 (ESTPPLLPTQEAAAPVTKSAPQRRE). A C3H1-type 3 zinc finger spans residues 164–191 (DAPQQLCPFAQAGGCHYGESCPYIHGNV). Residues 192–221 (CEICGLQVLHPYDQEQRGHHEKLCMANFER) form a makorin-type Cys-His region. The RING-type zinc-finger motif lies at 237-291 (CSICMERVYDKQSPSERRFGILSNCHHTYCLACIRQWRCARQFENPVIKSCPECR). The C3H1-type 4 zinc finger occupies 320 to 349 (GMGKKACKYFDQGRGTCPFGGKCLYLHAYP).

The protein localises to the cytoplasm. Its subcellular location is the nucleus. It carries out the reaction S-ubiquitinyl-[E2 ubiquitin-conjugating enzyme]-L-cysteine + [acceptor protein]-L-lysine = [E2 ubiquitin-conjugating enzyme]-L-cysteine + N(6)-ubiquitinyl-[acceptor protein]-L-lysine.. It functions in the pathway protein modification; protein ubiquitination. Its function is as follows. E3 ubiquitin ligase catalyzing the covalent attachment of ubiquitin moieties onto substrate proteins. Inhibits neurogenesis and axis formation during embryonic development by modulating the phosphatidylinositol 3-kinase (PI3K) pathway. Acts downstream of PI3K and akt1 to up-regulate gsk3b mRNA expression. In Xenopus tropicalis (Western clawed frog), this protein is E3 ubiquitin-protein ligase makorin-2 (mkrn2).